Here is a 378-residue protein sequence, read N- to C-terminus: Lipoyl synthase, mitochondrial (378 aa).

Residues Cys-97, Cys-102, Cys-108, Cys-128, Cys-132, Cys-135, and Ser-343 each contribute to the [4Fe-4S] cluster site. The Radical SAM core domain occupies 111–332 (GSDKSAATAT…RQRALDMGFL (222 aa)).

Belongs to the radical SAM superfamily. Lipoyl synthase family. It depends on [4Fe-4S] cluster as a cofactor.

Its subcellular location is the mitochondrion. The enzyme catalyses [[Fe-S] cluster scaffold protein carrying a second [4Fe-4S](2+) cluster] + N(6)-octanoyl-L-lysyl-[protein] + 2 oxidized [2Fe-2S]-[ferredoxin] + 2 S-adenosyl-L-methionine + 4 H(+) = [[Fe-S] cluster scaffold protein] + N(6)-[(R)-dihydrolipoyl]-L-lysyl-[protein] + 4 Fe(3+) + 2 hydrogen sulfide + 2 5'-deoxyadenosine + 2 L-methionine + 2 reduced [2Fe-2S]-[ferredoxin]. Its pathway is protein modification; protein lipoylation via endogenous pathway; protein N(6)-(lipoyl)lysine from octanoyl-[acyl-carrier-protein]: step 2/2. Functionally, catalyzes the radical-mediated insertion of two sulfur atoms into the C-6 and C-8 positions of the octanoyl moiety bound to the lipoyl domains of lipoate-dependent enzymes, thereby converting the octanoylated domains into lipoylated derivatives. In Phaeosphaeria nodorum (strain SN15 / ATCC MYA-4574 / FGSC 10173) (Glume blotch fungus), this protein is Lipoyl synthase, mitochondrial.